Consider the following 356-residue polypeptide: uncharacterized protein (356 aa).

This is an uncharacterized protein from Methanocaldococcus jannaschii (strain ATCC 43067 / DSM 2661 / JAL-1 / JCM 10045 / NBRC 100440) (Methanococcus jannaschii).